A 273-amino-acid polypeptide reads, in one-letter code: Undecaprenyl-diphosphatase (273 aa).

Helical transmembrane passes span 4 to 24 (MELW…FAPV), 48 to 68 (AANT…VVVF), 89 to 109 (LNLI…VLFE), 116 to 136 (LFST…MIAA), 152 to 172 (ITYK…WPGF), 193 to 213 (ADFT…LSLL), 222 to 242 (ADIP…LLAI), and 252 to 272 (IRLV…YFLY).

It belongs to the UppP family.

It localises to the cell membrane. The catalysed reaction is di-trans,octa-cis-undecaprenyl diphosphate + H2O = di-trans,octa-cis-undecaprenyl phosphate + phosphate + H(+). Catalyzes the dephosphorylation of undecaprenyl diphosphate (UPP). Confers resistance to bacitracin. The polypeptide is Undecaprenyl-diphosphatase (Geobacillus kaustophilus (strain HTA426)).